Consider the following 84-residue polypeptide: Small ribosomal subunit protein uS17 (84 aa).

Belongs to the universal ribosomal protein uS17 family. In terms of assembly, part of the 30S ribosomal subunit.

One of the primary rRNA binding proteins, it binds specifically to the 5'-end of 16S ribosomal RNA. This chain is Small ribosomal subunit protein uS17, found in Clostridium botulinum (strain Okra / Type B1).